The following is a 355-amino-acid chain: Guanine nucleotide-binding protein G(o) subunit alpha (355 aa).

Low complexity predominate over residues 1–17 (MGCASSAEERAAPSAQQ). A disordered region spans residues 1 to 24 (MGCASSAEERAAPSAQQADREKLK). G2 carries N-myristoyl glycine lipidation. C3 carries S-palmitoyl cysteine lipidation. Positions 32 to 355 (KDIKLLLLGA…ANNLRGCGLY (324 aa)) constitute a G-alpha domain. The segment at 35-48 (KLLLLGAGESGKST) is G1 motif. Residues 40-47 (GAGESGKS), 176-182 (LRTRVKT), 201-205 (DVGRG), 201-206 (DVGRGQ), 271-274 (NKKD), and A327 contribute to the GTP site. Positions 47 and 182 each coordinate Mg(2+). The segment at 174 to 182 (DILRTRVKT) is G2 motif. The segment at 197-206 (FKLFDVGRGQ) is G3 motif. The interval 267–274 (ILFLNKKD) is G4 motif. A G5 motif region spans residues 326 to 330 (TATDT).

It belongs to the G-alpha family. G(i/o/t/z) subfamily. As to quaternary structure, g proteins are composed of 3 units; alpha, beta and gamma. The alpha chain contains the guanine nucleotide binding site.

Functionally, guanine nucleotide-binding proteins (G proteins) are involved as modulators or transducers in various transmembrane signaling systems. The G(o) protein function is not clear. The chain is Guanine nucleotide-binding protein G(o) subunit alpha from Manduca sexta (Tobacco hawkmoth).